The sequence spans 208 residues: LexA repressor (208 aa).

Positions 28–48 form a DNA-binding region, H-T-H motif; it reads RAEIARQLGFRSANAAEEHLK. Residues serine 125 and lysine 162 each act as for autocatalytic cleavage activity in the active site.

This sequence belongs to the peptidase S24 family. Homodimer.

It catalyses the reaction Hydrolysis of Ala-|-Gly bond in repressor LexA.. In terms of biological role, represses a number of genes involved in the response to DNA damage (SOS response), including recA and lexA. In the presence of single-stranded DNA, RecA interacts with LexA causing an autocatalytic cleavage which disrupts the DNA-binding part of LexA, leading to derepression of the SOS regulon and eventually DNA repair. The polypeptide is LexA repressor (Alteromonas mediterranea (strain DSM 17117 / CIP 110805 / LMG 28347 / Deep ecotype)).